The following is a 434-amino-acid chain: Alpha-enolase (434 aa).

Serine 2 bears the N-acetylserine mark. Lysine 5 carries the N6-acetyllysine modification. Serine 40 lines the Mg(2+) pocket. A Phosphotyrosine modification is found at tyrosine 44. Residue lysine 60 is modified to N6-acetyllysine; alternate. N6-succinyllysine; alternate is present on lysine 60. An N6-acetyllysine mark is found at lysine 64 and lysine 71. At lysine 89 the chain carries N6-acetyllysine; alternate. The residue at position 89 (lysine 89) is an N6-succinyllysine; alternate. Lysine 126 is subject to N6-acetyllysine. Substrate-binding residues include histidine 158 and glutamate 167. 2 positions are modified to N6-acetyllysine: lysine 193 and lysine 199. Position 202 is an N6-acetyllysine; alternate (lysine 202). Lysine 202 is covalently cross-linked (Glycyl lysine isopeptide (Lys-Gly) (interchain with G-Cter in SUMO2); alternate). Residue glutamate 210 is the Proton donor of the active site. An N6-acetyllysine; alternate mark is found at lysine 228 and lysine 233. An N6-succinyllysine; alternate modification is found at lysine 228. N6-(2-hydroxyisobutyryl)lysine; alternate is present on lysine 228. Lysine 233 carries the N6-malonyllysine; alternate modification. Aspartate 245 provides a ligand contact to Mg(2+). At lysine 256 the chain carries N6-acetyllysine. The residue at position 263 (serine 263) is a Phosphoserine. Lysine 281 carries the post-translational modification N6-acetyllysine; alternate. At lysine 281 the chain carries N6-(2-hydroxyisobutyryl)lysine; alternate. Lysine 285 carries the post-translational modification N6-acetyllysine. Tyrosine 287 is subject to Phosphotyrosine. A Phosphoserine modification is found at serine 291. The Mg(2+) site is built by glutamate 293 and aspartate 318. Substrate-binding residues include glutamate 293 and aspartate 318. N6-acetyllysine occurs at positions 335 and 343. Lysine 343 serves as the catalytic Proton acceptor. Substrate-binding positions include 370–373 (SHRS) and lysine 394. The required for interaction with PLG stretch occupies residues 405–434 (AKYNQILRIEEELGSKAKFAGRSFRNPLAK). Lysine 406 bears the N6-acetyllysine mark. Lysine 420 carries the post-translational modification N6-acetyllysine; alternate. The residue at position 420 (lysine 420) is an N6-succinyllysine; alternate. Lysine 420 carries the post-translational modification N6-malonyllysine; alternate.

The protein belongs to the enolase family. As to quaternary structure, mammalian enolase is composed of 3 isozyme subunits, alpha, beta and gamma, which can form homodimers or heterodimers which are cell-type and development-specific. ENO1 interacts with PLG in the neuronal plasma membrane and promotes its activation. The C-terminal lysine is required for this binding. Interacts with ENO4 and PGAM2. Interacts with CMTM6. Mg(2+) serves as cofactor. In terms of processing, ISGylated. Post-translationally, lysine 2-hydroxyisobutyrylation (Khib) by p300/EP300 activates the phosphopyruvate hydratase activity. In terms of tissue distribution, expressed in flagella of epididymal sperm. The alpha/alpha homodimer is expressed in embryo and in most adult tissues. The alpha/beta heterodimer and the beta/beta homodimer are found in striated muscle, and the alpha/gamma heterodimer and the gamma/gamma homodimer in neurons.

It localises to the cytoplasm. It is found in the cell membrane. It carries out the reaction (2R)-2-phosphoglycerate = phosphoenolpyruvate + H2O. The protein operates within carbohydrate degradation; glycolysis; pyruvate from D-glyceraldehyde 3-phosphate: step 4/5. Glycolytic enzyme that catalyzes the conversion of 2-phosphoglycerate to phosphoenolpyruvate. In addition to glycolysis, involved in various processes such as growth control, hypoxia tolerance and allergic responses. May also function in the intravascular and pericellular fibrinolytic system due to its ability to serve as a receptor and activator of plasminogen on the cell surface of several cell-types such as leukocytes and neurons. Stimulates immunoglobulin production. The sequence is that of Alpha-enolase (Eno1) from Rattus norvegicus (Rat).